We begin with the raw amino-acid sequence, 968 residues long: RNA polymerase-associated protein RapA (968 aa).

Residues 164 to 334 enclose the Helicase ATP-binding domain; sequence DVGRRHAPRV…FARLRLLDPN (171 aa). 177–184 contacts ATP; it reads DEVGLGKT. Residues 280-283 carry the DEAH box motif; it reads DEAH. The 173-residue stretch at 490-662 folds into the Helicase C-terminal domain; it reads RVEWLMGYLT…YLASPDQTEG (173 aa).

It belongs to the SNF2/RAD54 helicase family. RapA subfamily. In terms of assembly, interacts with the RNAP. Has a higher affinity for the core RNAP than for the holoenzyme. Its ATPase activity is stimulated by binding to RNAP.

Transcription regulator that activates transcription by stimulating RNA polymerase (RNAP) recycling in case of stress conditions such as supercoiled DNA or high salt concentrations. Probably acts by releasing the RNAP, when it is trapped or immobilized on tightly supercoiled DNA. Does not activate transcription on linear DNA. Probably not involved in DNA repair. This Shigella dysenteriae serotype 1 (strain Sd197) protein is RNA polymerase-associated protein RapA.